Reading from the N-terminus, the 639-residue chain is Serine/threonine-protein phosphatase 2B catalytic subunit A1 (639 aa).

Positions 120, 122, and 148 each coordinate Fe cation. Positions 148 and 180 each coordinate Zn(2+). Histidine 181 functions as the Proton donor in the catalytic mechanism. Residues histidine 229 and histidine 311 each coordinate Zn(2+). Over residues 494–503 the composition is skewed to basic and acidic residues; sequence KSDIENERLP. Residues 494–602 form a disordered region; that stretch reads KSDIENERLP…PSTRRRSLEN (109 aa). 2 stretches are compositionally biased toward low complexity: residues 515–527 and 546–572; these read ASPS…PATP and TPIS…GGPP.

This sequence belongs to the PPP phosphatase family. PP-2B subfamily. Composed of two components (A and B), the A component is the catalytic subunit and the B component confers calcium sensitivity. Requires Fe(3+) as cofactor. Zn(2+) serves as cofactor.

It carries out the reaction O-phospho-L-seryl-[protein] + H2O = L-seryl-[protein] + phosphate. The enzyme catalyses O-phospho-L-threonyl-[protein] + H2O = L-threonyl-[protein] + phosphate. In terms of biological role, calcium-dependent, calmodulin-stimulated protein phosphatase. This subunit may have a role in the calmodulin activation of calcineurin. The protein is Serine/threonine-protein phosphatase 2B catalytic subunit A1 (CNA1) of Cryptococcus neoformans var. grubii serotype A (strain H99 / ATCC 208821 / CBS 10515 / FGSC 9487) (Filobasidiella neoformans var. grubii).